We begin with the raw amino-acid sequence, 389 residues long: Arrestin-C (389 aa).

Belongs to the arrestin family. Retina and pineal gland.

May play a role in an as yet undefined retina-specific signal transduction. Could bind to photoactivated-phosphorylated red/green opsins. The polypeptide is Arrestin-C (arr3) (Lithobates pipiens (Northern leopard frog)).